The primary structure comprises 53 residues: Conotoxin Cal6.31 (53 aa).

A signal peptide spans 1–24 (MKLTCVLIAAVLLLAVCQLDSADA). Cystine bridges form between C29–C43, C36–C47, and C42–C51.

The protein belongs to the conotoxin O1 superfamily. In terms of tissue distribution, expressed by the venom duct.

The protein resides in the secreted. Functionally, probable neurotoxin. This Californiconus californicus (California cone) protein is Conotoxin Cal6.31.